We begin with the raw amino-acid sequence, 603 residues long: Extracellular basic protease (603 aa).

Residues 1–21 form the signal peptide; sequence MNLSNISAVKVLTLVVSAAIA. Residues 22–132 constitute a propeptide that is removed on maturation; that stretch reads GQVCAAESIV…VEVDRLAYPK (111 aa). A Peptidase S8 domain is found at 143 to 468; that stretch reads QWHYFGNYGV…SGIVDANAAV (326 aa). Asp173 (charge relay system) is an active-site residue. The disordered stretch occupies residues 197–221; the sequence is PNARDGDQRDNNPADEGDWFDNWDC. Cystine bridges form between Cys221–Cys273 and Cys315–Cys352. Residue His237 is the Charge relay system of the active site. Ser409 functions as the Charge relay system in the catalytic mechanism. A propeptide spanning residues 477–603 is cleaved from the precursor; sequence RAQPRPPVNQ…GSIDSWSLTF (127 aa). Residues 478–603 form the P/Homo B domain; sequence AQPRPPVNQP…GSIDSWSLTF (126 aa).

This sequence belongs to the peptidase S8 family.

The protein localises to the secreted. The chain is Extracellular basic protease (bprV) from Dichelobacter nodosus (Bacteroides nodosus).